The primary structure comprises 588 residues: Proline--tRNA ligase (588 aa).

This sequence belongs to the class-II aminoacyl-tRNA synthetase family. ProS type 1 subfamily. In terms of assembly, homodimer.

The protein resides in the cytoplasm. It catalyses the reaction tRNA(Pro) + L-proline + ATP = L-prolyl-tRNA(Pro) + AMP + diphosphate. In terms of biological role, catalyzes the attachment of proline to tRNA(Pro) in a two-step reaction: proline is first activated by ATP to form Pro-AMP and then transferred to the acceptor end of tRNA(Pro). As ProRS can inadvertently accommodate and process non-cognate amino acids such as alanine and cysteine, to avoid such errors it has two additional distinct editing activities against alanine. One activity is designated as 'pretransfer' editing and involves the tRNA(Pro)-independent hydrolysis of activated Ala-AMP. The other activity is designated 'posttransfer' editing and involves deacylation of mischarged Ala-tRNA(Pro). The misacylated Cys-tRNA(Pro) is not edited by ProRS. In Corynebacterium efficiens (strain DSM 44549 / YS-314 / AJ 12310 / JCM 11189 / NBRC 100395), this protein is Proline--tRNA ligase.